Here is a 315-residue protein sequence, read N- to C-terminus: Acetyl-coenzyme A carboxylase carboxyl transferase subunit alpha (315 aa).

A CoA carboxyltransferase C-terminal domain is found at 32-293; sequence NISDEIARLQ…RADLVQQLDM (262 aa).

It belongs to the AccA family. Acetyl-CoA carboxylase is a heterohexamer composed of biotin carboxyl carrier protein (AccB), biotin carboxylase (AccC) and two subunits each of ACCase subunit alpha (AccA) and ACCase subunit beta (AccD).

Its subcellular location is the cytoplasm. It carries out the reaction N(6)-carboxybiotinyl-L-lysyl-[protein] + acetyl-CoA = N(6)-biotinyl-L-lysyl-[protein] + malonyl-CoA. It participates in lipid metabolism; malonyl-CoA biosynthesis; malonyl-CoA from acetyl-CoA: step 1/1. Component of the acetyl coenzyme A carboxylase (ACC) complex. First, biotin carboxylase catalyzes the carboxylation of biotin on its carrier protein (BCCP) and then the CO(2) group is transferred by the carboxyltransferase to acetyl-CoA to form malonyl-CoA. The sequence is that of Acetyl-coenzyme A carboxylase carboxyl transferase subunit alpha from Pseudomonas putida (strain ATCC 47054 / DSM 6125 / CFBP 8728 / NCIMB 11950 / KT2440).